We begin with the raw amino-acid sequence, 284 residues long: Tropomyosin (284 aa).

Residues 1–38 form a disordered region; sequence MEAIKKKMQAMKLEKDNAVDRAETAEQQSREAALRAEK. A coiled-coil region spans residues 1–284; sequence MEAIKKKMQA…DQTFSELTGY (284 aa). The segment covering 12–38 has biased composition (basic and acidic residues); the sequence is KLEKDNAVDRAETAEQQSREAALRAEK.

It belongs to the tropomyosin family. Homodimer.

Functionally, tropomyosin, in association with the troponin complex, plays a central role in the calcium dependent regulation of muscle contraction. This chain is Tropomyosin, found in Rhipicephalus microplus (Cattle tick).